Reading from the N-terminus, the 189-residue chain is UPF0301 protein PSPA7_0505 (189 aa).

It belongs to the UPF0301 (AlgH) family.

The polypeptide is UPF0301 protein PSPA7_0505 (Pseudomonas paraeruginosa (strain DSM 24068 / PA7) (Pseudomonas aeruginosa (strain PA7))).